Here is a 404-residue protein sequence, read N- to C-terminus: Coenzyme F420H(2) oxidase (404 aa).

The Fe cation site is built by H84, E86, D88, H89, H152, D170, and H233. One can recognise a Flavodoxin-like domain in the interval 259 to 399; it reads VTVIYDTMHH…ACFEAGRRLA (141 aa). FMN is bound by residues 265 to 270, 317 to 320, and 351 to 356; these read TMHHST, AIYD, and SMGGRG.

It in the N-terminal section; belongs to the zinc metallo-hydrolase group 3 family. The cofactor is FMN. Requires Fe cation as cofactor.

It carries out the reaction 2 reduced coenzyme F420-(gamma-L-Glu)(n) + O2 = 2 oxidized coenzyme F420-(gamma-L-Glu)(n) + 2 H2O + 2 H(+). Its function is as follows. Catalyzes the oxidation of F420H(2) with O(2). May be involved in O(2) detoxification, reducing the intracellular O(2) concentration to a level allowing growth at the expense of methane formation. The polypeptide is Coenzyme F420H(2) oxidase (Methanothermobacter thermautotrophicus (strain ATCC 29096 / DSM 1053 / JCM 10044 / NBRC 100330 / Delta H) (Methanobacterium thermoautotrophicum)).